The sequence spans 308 residues: Aspartate carbamoyltransferase catalytic subunit (308 aa).

Carbamoyl phosphate contacts are provided by arginine 58 and threonine 59. L-aspartate is bound at residue lysine 86. Arginine 108, histidine 136, and glutamine 139 together coordinate carbamoyl phosphate. L-aspartate-binding residues include arginine 169 and arginine 227. Residues glycine 268 and proline 269 each contribute to the carbamoyl phosphate site.

This sequence belongs to the aspartate/ornithine carbamoyltransferase superfamily. ATCase family. In terms of assembly, heterododecamer (2C3:3R2) of six catalytic PyrB chains organized as two trimers (C3), and six regulatory PyrI chains organized as three dimers (R2).

It catalyses the reaction carbamoyl phosphate + L-aspartate = N-carbamoyl-L-aspartate + phosphate + H(+). It functions in the pathway pyrimidine metabolism; UMP biosynthesis via de novo pathway; (S)-dihydroorotate from bicarbonate: step 2/3. Its function is as follows. Catalyzes the condensation of carbamoyl phosphate and aspartate to form carbamoyl aspartate and inorganic phosphate, the committed step in the de novo pyrimidine nucleotide biosynthesis pathway. The protein is Aspartate carbamoyltransferase catalytic subunit of Chloroflexus aggregans (strain MD-66 / DSM 9485).